The primary structure comprises 340 residues: Large ribosomal subunit protein uL10 (340 aa).

The tract at residues 305-340 (APQPAEEKVEEAEEEEEEEEEASEEEALAGLGALFG) is disordered. Residues 312 to 331 (KVEEAEEEEEEEEEASEEEA) show a composition bias toward acidic residues.

This sequence belongs to the universal ribosomal protein uL10 family. As to quaternary structure, part of the 50S ribosomal subunit. Forms part of the ribosomal stalk which helps the ribosome interact with GTP-bound translation factors. Forms a heptameric L10(L12)2(L12)2(L12)2 complex, where L10 forms an elongated spine to which the L12 dimers bind in a sequential fashion.

In terms of biological role, forms part of the ribosomal stalk, playing a central role in the interaction of the ribosome with GTP-bound translation factors. This chain is Large ribosomal subunit protein uL10, found in Thermococcus gammatolerans (strain DSM 15229 / JCM 11827 / EJ3).